A 313-amino-acid chain; its full sequence is Type I restriction enzyme EcoprrI endonuclease subunit (313 aa).

This sequence belongs to the HsdR family. The type I restriction/modification system is composed of three polypeptides R, M and S; the restriction enzyme has stoichiometry R(2)M(2)S(1) while the methyltransferase is M(2)S(1).

It carries out the reaction Endonucleolytic cleavage of DNA to give random double-stranded fragments with terminal 5'-phosphates, ATP is simultaneously hydrolyzed.. Functionally, the subtype C restriction (R) subunit of a type I restriction enzyme that recognizes 5'-CCAN(7)RTGC-3' and cleaves a random distance away. The R subunit is required for both endonuclease and ATPase activities but not for modification. Cleaves only non-methylated DNA, hemi-methylated and fully methylated DNA are not substrates. After locating a non-methylated recognition site, the enzyme complex serves as a molecular motor that translocates DNA in an ATP-dependent manner until a collision occurs that triggers cleavage. The prr locus restricts phage T4 mutants lacking polynucleotide kinase or RNA ligase; T4 mutants lacking these genes manifest a T4-induced anticodon nuclease (ACNase). This is a putative 'masking-agent' for the ACNase encoded by prrC. It is thought that Stp and other T4-encoded ACNase factors counteract the masking agents, thus activating the latent ACNase. This is Type I restriction enzyme EcoprrI endonuclease subunit from Escherichia coli.